The sequence spans 393 residues: GDSL esterase/lipase At1g28600 (393 aa).

Residues 1–22 (MASLDSLVIFLFSTLFVTIVSS) form the signal peptide. Catalysis depends on serine 38, which acts as the Nucleophile. 2 N-linked (GlcNAc...) asparagine glycosylation sites follow: asparagine 133 and asparagine 317. Residues aspartate 340 and histidine 343 contribute to the active site. Asparagine 382 carries N-linked (GlcNAc...) asparagine glycosylation.

Belongs to the 'GDSL' lipolytic enzyme family.

The protein resides in the secreted. This is GDSL esterase/lipase At1g28600 from Arabidopsis thaliana (Mouse-ear cress).